A 303-amino-acid chain; its full sequence is Sulfotransferase 6B1 (303 aa).

65–70 lines the 3'-phosphoadenylyl sulfate pocket; sequence KCGSNW. The active-site Proton acceptor is the His118. 3'-phosphoadenylyl sulfate is bound by residues Arg140, Ser148, Tyr203, 237–242, and 259–261; these read STFLAM and RKG.

It belongs to the sulfotransferase 1 family. Expressed in brain, heart, kidney, thymus, lung, liver and testis.

Its subcellular location is the cytoplasm. The protein resides in the cytosol. The enzyme catalyses thyroxine + 3'-phosphoadenylyl sulfate = thyroxine sulfate + adenosine 3',5'-bisphosphate + H(+). Functionally, sulfotransferase that utilizes 3'-phospho-5'-adenylyl sulfate (PAPS) as sulfonate donor to catalyze the sulfate conjugation of thyroxine. Involved in the metabolism of thyroxine. This Mus musculus (Mouse) protein is Sulfotransferase 6B1 (Sult6b1).